A 312-amino-acid chain; its full sequence is Pollen allergen Phl p 5.0101 (312 aa).

The first 25 residues, 1 to 25, serve as a signal peptide directing secretion; that stretch reads MAVHQYTVALFLAVALVAGPAASYA.

Belongs to the Poa p IX/Phl p VI allergen family.

The protein resides in the secreted. The chain is Pollen allergen Phl p 5.0101 from Phleum pratense (Common timothy).